Reading from the N-terminus, the 549-residue chain is MKNINPTQTSAWQALQKHYDEMKDVTIAELFANDSDRFAKFSATFDDLMLVDFSKNRITEETLAKLQDLAKETDLAGAIKSMFSGEKINRTEDRAVLHVALRNRSNTPIIVDGKDVMPEVNAVLEKMKTFSQAIISGQWKGYTGKAITDVVNIGIGGSDLGPFMVTEALRPYKNHLTMHFVSNVDGTHIAEVLKKVNPETTLFLVASKTFTTQETMTNAHSARDWFLKSAGDEKHVAKHFAALSTNAKAVGEFGIDTANMFEFWDWVGGRYSLWSAIGLSIILSVGFDNFVELLSGAHAMDKHFSTTPAEKNLPILLALIGIWYNNFFGAETEAILPYDQYMHRFAAYFQQGNMESNGKYVDRNGNAVDYQTGPIIWGEPGTNGQHAFYQLIHQGTKMVPCDFIAPAITHNPLSDHHQKLLSNFFAQTEALAFGKSREVVEQEYRDQGKDPAQLEHVVPFKVFEGNRPTNSILLREITPFSLGALIALYEHKIFTQGAILNIFTFDQWGVELGKQLANRILPELGDDKAISSHDSSTNGLINRYKAWRA.

Catalysis depends on E355, which acts as the Proton donor. Residues H386 and K514 contribute to the active site.

The protein belongs to the GPI family.

The protein localises to the cytoplasm. The enzyme catalyses alpha-D-glucose 6-phosphate = beta-D-fructose 6-phosphate. Its pathway is carbohydrate biosynthesis; gluconeogenesis. It functions in the pathway carbohydrate degradation; glycolysis; D-glyceraldehyde 3-phosphate and glycerone phosphate from D-glucose: step 2/4. Catalyzes the reversible isomerization of glucose-6-phosphate to fructose-6-phosphate. The chain is Glucose-6-phosphate isomerase from Salmonella schwarzengrund (strain CVM19633).